We begin with the raw amino-acid sequence, 434 residues long: Nicotinate phosphoribosyltransferase (434 aa).

Residue His-242 is modified to Phosphohistidine; by autocatalysis.

The protein belongs to the NAPRTase family. Transiently phosphorylated on a His residue during the reaction cycle. Phosphorylation strongly increases the affinity for substrates and increases the rate of nicotinate D-ribonucleotide production. Dephosphorylation regenerates the low-affinity form of the enzyme, leading to product release.

It catalyses the reaction nicotinate + 5-phospho-alpha-D-ribose 1-diphosphate + ATP + H2O = nicotinate beta-D-ribonucleotide + ADP + phosphate + diphosphate. It participates in cofactor biosynthesis; NAD(+) biosynthesis; nicotinate D-ribonucleotide from nicotinate: step 1/1. Its function is as follows. Catalyzes the synthesis of beta-nicotinate D-ribonucleotide from nicotinate and 5-phospho-D-ribose 1-phosphate at the expense of ATP. In Rhizobium rhizogenes (strain K84 / ATCC BAA-868) (Agrobacterium radiobacter), this protein is Nicotinate phosphoribosyltransferase.